The following is a 393-amino-acid chain: 4-hydroxyphenylpyruvate dioxygenase (393 aa).

At T2 the chain carries N-acetylthreonine. VOC domains are found at residues 18 to 149 (HFHS…LVEK) and 180 to 338 (IIDH…IFTK). An N6-succinyllysine modification is found at K132. H183 serves as a coordination point for Fe cation. S211, S226, and S250 each carry phosphoserine. The Fe cation site is built by H266 and E349.

Belongs to the 4HPPD family. Homodimer. It depends on Fe cation as a cofactor.

It localises to the cytoplasm. Its subcellular location is the endoplasmic reticulum membrane. The protein resides in the golgi apparatus membrane. It carries out the reaction 3-(4-hydroxyphenyl)pyruvate + O2 = homogentisate + CO2. Its pathway is amino-acid degradation; L-phenylalanine degradation; acetoacetate and fumarate from L-phenylalanine: step 3/6. In terms of biological role, catalyzes the conversion of 4-hydroxyphenylpyruvic acid to homogentisic acid, one of the steps in tyrosine catabolism. In Rattus norvegicus (Rat), this protein is 4-hydroxyphenylpyruvate dioxygenase (Hpd).